We begin with the raw amino-acid sequence, 494 residues long: Protein DETOXIFICATION 21 (494 aa).

Ala2 bears the N-acetylalanine mark. Helical transmembrane passes span 40 to 60, 73 to 95, 123 to 143, 158 to 178, 188 to 208, 217 to 237, 268 to 288, 297 to 317, 340 to 360, 384 to 404, 416 to 436, and 441 to 461; these read LWIV…VSII, LAAY…LGMA, IVLT…GPIL, IIAL…TCQM, IIAY…WLLM, GAMT…LLFV, GGML…TGNL, ALAI…GFLA, LTAV…FLFL, LLAF…VAVG, LACY…VVGL, and VWIG…VMTL.

Belongs to the multi antimicrobial extrusion (MATE) (TC 2.A.66.1) family.

Its subcellular location is the membrane. The protein is Protein DETOXIFICATION 21 of Arabidopsis thaliana (Mouse-ear cress).